Consider the following 505-residue polypeptide: Glycerol kinase (505 aa).

Position 13 (Thr-13) interacts with ADP. ATP-binding residues include Thr-13, Thr-14, and Ser-15. Sn-glycerol 3-phosphate is bound at residue Thr-13. Arg-17 lines the ADP pocket. 4 residues coordinate sn-glycerol 3-phosphate: Arg-83, Glu-84, Tyr-135, and Asp-247. Glycerol is bound by residues Arg-83, Glu-84, Tyr-135, Asp-247, and Gln-248. ADP is bound by residues Thr-269 and Gly-313. Positions 269, 313, 317, and 414 each coordinate ATP. Positions 414 and 418 each coordinate ADP.

The protein belongs to the FGGY kinase family.

It catalyses the reaction glycerol + ATP = sn-glycerol 3-phosphate + ADP + H(+). The protein operates within polyol metabolism; glycerol degradation via glycerol kinase pathway; sn-glycerol 3-phosphate from glycerol: step 1/1. With respect to regulation, inhibited by fructose 1,6-bisphosphate (FBP). Its function is as follows. Key enzyme in the regulation of glycerol uptake and metabolism. Catalyzes the phosphorylation of glycerol to yield sn-glycerol 3-phosphate. The chain is Glycerol kinase from Clavibacter michiganensis subsp. michiganensis (strain NCPPB 382).